The primary structure comprises 204 residues: TPR repeat-containing protein RHE_CH03534.1 (204 aa).

The first 29 residues, 1-29 (MSAMRLFALTSAMLPLAFILSTSPFPATA), serve as a signal peptide directing secretion. 3 TPR repeats span residues 84-117 (INLL…KPDY), 118-151 (AESW…EPRH), and 153-185 (GALS…YPAD).

This chain is TPR repeat-containing protein RHE_CH03534.1, found in Rhizobium etli (strain ATCC 51251 / DSM 11541 / JCM 21823 / NBRC 15573 / CFN 42).